A 1822-amino-acid chain; its full sequence is Signal-induced proliferation-associated 1-like protein 1 (1822 aa).

Disordered regions lie at residues M1–H30 and G47–N125. Residues P84–S94 are compositionally biased toward basic and acidic residues. Low complexity predominate over residues R95–N125. Phosphoserine occurs at positions 162, 187, 193, 208, 255, and 288. The disordered stretch occupies residues E277–R297. Positions F638–L855 constitute a Rap-GAP domain. Positions E992–D1068 constitute a PDZ domain. 7 positions are modified to phosphoserine: S1117, S1126, S1155, S1166, S1188, S1209, and S1220. The interval A1134 to L1165 is disordered. A disordered region spans residues S1183–D1252. Residues S1188–T1198 are compositionally biased toward low complexity. The segment covering D1225 to Q1244 has biased composition (polar residues). S1273 and S1288 each carry phosphoserine. The segment at H1286–G1324 is disordered. Positions S1300–A1315 are enriched in low complexity. Phosphoserine; by PLK2 is present on S1344. A Phosphothreonine; by PLK2 modification is found at T1348. Residues T1358–S1367 are compositionally biased toward low complexity. The disordered stretch occupies residues T1358–H1382. A Phosphoserine; by CDK5 modification is found at S1367. At S1384 the chain carries Phosphoserine. Residues L1395 to E1407 are compositionally biased toward basic and acidic residues. Residues L1395 to P1493 are disordered. Phosphoserine is present on residues S1408, S1409, S1430, S1449, and S1451. Residues K1417–D1436 are compositionally biased toward polar residues. 2 stretches are compositionally biased toward low complexity: residues A1437–S1451 and S1471–S1486. A phosphoserine mark is found at S1546 and S1567. The interval S1567–R1595 is disordered. Phosphothreonine is present on T1569. Phosphoserine is present on residues S1572, S1583, S1586, S1603, and S1606. An Asymmetric dimethylarginine modification is found at R1619. Phosphoserine occurs at positions 1621, 1665, 1668, 1726, 1729, 1746, 1747, and 1752. Residues P1753–E1813 adopt a coiled-coil conformation.

Interacts (via PDZ domain) with EPHA4 (via PDZ motif); controls neuronal morphology through regulation of the RAP1 (RAP1A or RAP1B) and RAP2 (RAP2A, RAP2B or RAP2C) GTPases. Interacts with DLG4, PDLIM5, PDLIM7 and LZTS3. Interacts with the actin cytoskeleton. Ubiquitinated and degraded by the SCF(BTRC) following phosphorylation by PLK2. In terms of processing, phosphorylated at Ser-1367 by CDK5, creating a docking site for the POLO box domains of PLK2. Subsequently, PLK2 binds and phosphorylates SIPA1L1, leading to ubiquitination and degradation by the proteasome. In terms of tissue distribution, detected in brain (at protein level).

The protein resides in the cytoplasm. Its subcellular location is the cytoskeleton. The protein localises to the postsynaptic density. It localises to the synapse. It is found in the synaptosome. Functionally, stimulates the GTPase activity of RAP2A. Promotes reorganization of the actin cytoskeleton and recruits DLG4 to F-actin. Contributes to the regulation of dendritic spine morphogenesis. This Rattus norvegicus (Rat) protein is Signal-induced proliferation-associated 1-like protein 1 (Sipa1l1).